Consider the following 169-residue polypeptide: MLRRKPIDAGQLDLQEKVVEVRRVTKVVKGGRNFRFAALVVVGDENGHVGIGAGKAMEVPDAIKKAVEDAKKNLIVVPIVGTTIPHEVRGHFGAGNILIMPAVEGTGVIAGGPARAVLELAGLKDVRAKSLGSNNPRNMVNATIEGLNSLKTVEDIAKLRGKKVEELLG.

An S5 DRBM domain is found at 14–77 (LQEKVVEVRR…EDAKKNLIVV (64 aa)).

It belongs to the universal ribosomal protein uS5 family. In terms of assembly, part of the 30S ribosomal subunit. Contacts proteins S4 and S8.

With S4 and S12 plays an important role in translational accuracy. Its function is as follows. Located at the back of the 30S subunit body where it stabilizes the conformation of the head with respect to the body. The sequence is that of Small ribosomal subunit protein uS5 from Clostridioides difficile (strain 630) (Peptoclostridium difficile).